We begin with the raw amino-acid sequence, 240 residues long: Orotidine 5'-phosphate decarboxylase (240 aa).

Residues Asp12, Lys34, 62 to 71, Thr117, Arg180, Gln189, Gly209, and Arg210 each bind substrate; that span reads DMKLFDIGNT. The Proton donor role is filled by Lys64.

The protein belongs to the OMP decarboxylase family. Type 1 subfamily. In terms of assembly, homodimer.

It carries out the reaction orotidine 5'-phosphate + H(+) = UMP + CO2. Its pathway is pyrimidine metabolism; UMP biosynthesis via de novo pathway; UMP from orotate: step 2/2. Catalyzes the decarboxylation of orotidine 5'-monophosphate (OMP) to uridine 5'-monophosphate (UMP). The chain is Orotidine 5'-phosphate decarboxylase from Ruegeria pomeroyi (strain ATCC 700808 / DSM 15171 / DSS-3) (Silicibacter pomeroyi).